Consider the following 1048-residue polypeptide: B3 domain-containing protein Os02g0598200 (1048 aa).

The interval 1-345 (MDGAVRGQGC…QKERVASSDN (345 aa)) is disordered. A compositionally biased stretch (basic residues) spans 16–25 (SFNKTKKKNR). Composition is skewed to basic and acidic residues over residues 26 to 134 (NCSD…SDDM), 151 to 162 (KKNSRNDADEEK), 169 to 214 (CSDD…GDKK), 243 to 253 (KNMKSDGDSYK), 281 to 295 (AKER…MEMK), and 332 to 345 (LKRE…SSDN). Positions 375 to 468 (AFAFFKFVRD…TFSVRVFGID (94 aa)) form a DNA-binding region, TF-B3 1. The segment at 505 to 528 (QYQDSEDIHDGPNVSGESPRSKEP) is disordered. The TF-B3 2 DNA-binding region spans 953–1048 (LQFCIPSTIQ…LAFQVYITRK (96 aa)).

The protein resides in the nucleus. This is B3 domain-containing protein Os02g0598200 from Oryza sativa subsp. japonica (Rice).